A 265-amino-acid chain; its full sequence is 5'-nucleotidase SurE (265 aa).

Residues Asp-8, Asp-9, Ser-40, and Asn-98 each contribute to the a divalent metal cation site.

It belongs to the SurE nucleotidase family. Requires a divalent metal cation as cofactor.

The protein resides in the cytoplasm. It carries out the reaction a ribonucleoside 5'-phosphate + H2O = a ribonucleoside + phosphate. In terms of biological role, nucleotidase that shows phosphatase activity on nucleoside 5'-monophosphates. The polypeptide is 5'-nucleotidase SurE (Trichormus variabilis (strain ATCC 29413 / PCC 7937) (Anabaena variabilis)).